The sequence spans 372 residues: Alanine dehydrogenase (372 aa).

Arg-15 and Lys-75 together coordinate substrate. His-96 serves as the catalytic Proton donor/acceptor. NAD(+) contacts are provided by residues Ser-134, 178 to 179 (IA), Asp-198, Ser-220, 239 to 240 (VL), 267 to 270 (IAID), Arg-280, and 299 to 302 (VANM). Residue Asp-270 is the Proton donor/acceptor of the active site.

The protein belongs to the AlaDH/PNT family. As to quaternary structure, homohexamer.

The protein localises to the cytoplasm. The enzyme catalyses L-alanine + NAD(+) + H2O = pyruvate + NH4(+) + NADH + H(+). It participates in amino-acid degradation; L-alanine degradation via dehydrogenase pathway; NH(3) and pyruvate from L-alanine: step 1/1. Its activity is regulated as follows. Inhibited by p-chloromercuribenzoate and HgCl(2) and by Cu(2+) and Pb(2+) salts, unaffected by amino acids such as D-alanine and beta-alanine or by nucleotides or nucleosides. Catalyzes the reversible reductive amination of pyruvate to L-alanine. Prefers L-alanine for oxidative deamination, other substrates are poorly reactive. In the other direction 2-oxobutyrate is almost as reactive as pyruvate. Ammonia is the sole amino donor for the reductive amination of pyruvate, NADPH is inert. Reductive amination proceeds through a sequential, ordered ternary-binary mechanism, where NADH binds first followed by ammonia and pyruvate; the products are released in the order L-alanine and NAD(+). A key factor in the assimilation of L-alanine as an energy source via the tricarboxylic acid cycle during sporulation. The protein is Alanine dehydrogenase (ald) of Lysinibacillus sphaericus (Bacillus sphaericus).